We begin with the raw amino-acid sequence, 91 residues long: Ice-structuring protein (91 aa).

An N-terminal signal peptide occupies residues methionine 1–threonine 21. A propeptide spans glutamate 22 to aspartate 39 (removed by a dipeptidylpeptidase).

The protein belongs to the type-I AFP family.

The protein resides in the secreted. Functionally, contributes to protect fish blood from freezing at subzero sea water temperatures. Lowers the blood freezing point. Binds to nascent ice crystals and prevents further growth. The chain is Ice-structuring protein from Pseudopleuronectes americanus (Winter flounder).